The primary structure comprises 381 residues: Subtilisin E (381 aa).

A signal peptide spans 1–29 (MRSKKLWISLLFALTLIFTMAFSNMSAQA). The propeptide occupies 30–106 (AGKSSTEKKY…VEEDHIAHEY (77 aa)). Positions 38–103 (KYIVGFKQTM…VAYVEEDHIA (66 aa)) constitute an Inhibitor I9 domain. Glutamine 108 is a binding site for Ca(2+). The region spanning 111–380 (PYGISQIKAP…KGLINVQAAA (270 aa)) is the Peptidase S8 domain. The active-site Charge relay system is the aspartate 138. A Ca(2+)-binding site is contributed by aspartate 147. The Charge relay system role is filled by histidine 170. Leucine 181, asparagine 183, isoleucine 185, valine 187, alanine 275, tyrosine 277, threonine 280, and aspartate 303 together coordinate Ca(2+). The Charge relay system role is filled by serine 327.

Belongs to the peptidase S8 family. Requires Ca(2+) as cofactor.

It localises to the secreted. It carries out the reaction Hydrolysis of proteins with broad specificity for peptide bonds, and a preference for a large uncharged residue in P1. Hydrolyzes peptide amides.. Inhibited by PMSF (phenylmethylsulphonyl fluoride) and 3,4-dichloroisocoumarin but not by EDTA (shown for strain RT-5). In terms of biological role, an extracellular alkaline serine protease, it catalyzes the hydrolysis of proteins and peptide amides. The chain is Subtilisin E from Bacillus subtilis (strain 168).